We begin with the raw amino-acid sequence, 206 residues long: ATP-dependent Clp protease proteolytic subunit (206 aa).

Ser101 functions as the Nucleophile in the catalytic mechanism. Residue His126 is part of the active site.

It belongs to the peptidase S14 family. As to quaternary structure, component of the chloroplastic Clp protease core complex.

It is found in the plastid. It localises to the chloroplast stroma. It catalyses the reaction Hydrolysis of proteins to small peptides in the presence of ATP and magnesium. alpha-casein is the usual test substrate. In the absence of ATP, only oligopeptides shorter than five residues are hydrolyzed (such as succinyl-Leu-Tyr-|-NHMec, and Leu-Tyr-Leu-|-Tyr-Trp, in which cleavage of the -Tyr-|-Leu- and -Tyr-|-Trp bonds also occurs).. Its function is as follows. Cleaves peptides in various proteins in a process that requires ATP hydrolysis. Has a chymotrypsin-like activity. Plays a major role in the degradation of misfolded proteins. This chain is ATP-dependent Clp protease proteolytic subunit, found in Solanum lycopersicum (Tomato).